Consider the following 341-residue polypeptide: CD2 antigen cytoplasmic tail-binding protein 2 (341 aa).

Positions 1–66 (MPKRKVTFQG…DGGSSKYDIL (66 aa)) are disordered. K26 participates in a covalent cross-link: Glycyl lysine isopeptide (Lys-Gly) (interchain with G-Cter in SUMO2). The residue at position 44 (K44) is an N6-acetyllysine. Residues S46, S49, and S118 each carry the phosphoserine modification. Residues 49 to 58 (SDEEEDDDDG) show a composition bias toward acidic residues. Disordered stretches follow at residues 131-151 (RPPG…GQTS) and 178-199 (LGAR…PQRL). A phosphoserine mark is found at S194 and S195. Residues 280–338 (DVMWEYKWENTGDAELYGPFTSAQMQTWVSEGYFPDGVYCRKLDPPGGQFYNSKRIDFD) enclose the GYF domain.

As to quaternary structure, component of the U5 snRNP complex composed of the U5 snRNA and at least PRPF6, PRPF8, SNRNP200, EFTUD2, SNRNP40, DDX23, TXNL4A and CD2BP2. Interacts directly with TXNL4A and PRPF6. Interacts (via GYF domain) with CD2 (via Pro-rich sequence in the cytoplasmic domain). Interacts with PQBP1.

It is found in the cytoplasm. Its subcellular location is the nucleus. Involved in pre-mRNA splicing as component of the U5 snRNP complex that is involved in spliceosome assembly. This chain is CD2 antigen cytoplasmic tail-binding protein 2 (CD2BP2), found in Homo sapiens (Human).